Reading from the N-terminus, the 415-residue chain is Serine--tRNA ligase (415 aa).

An L-serine-binding site is contributed by 231–233 (TAE). ATP is bound at residue 262–264 (RSE). E285 is an L-serine binding site. Residue 349 to 352 (EISS) coordinates ATP. S383 contacts L-serine.

This sequence belongs to the class-II aminoacyl-tRNA synthetase family. Type-1 seryl-tRNA synthetase subfamily. In terms of assembly, homodimer. The tRNA molecule binds across the dimer.

Its subcellular location is the cytoplasm. It carries out the reaction tRNA(Ser) + L-serine + ATP = L-seryl-tRNA(Ser) + AMP + diphosphate + H(+). It catalyses the reaction tRNA(Sec) + L-serine + ATP = L-seryl-tRNA(Sec) + AMP + diphosphate + H(+). It participates in aminoacyl-tRNA biosynthesis; selenocysteinyl-tRNA(Sec) biosynthesis; L-seryl-tRNA(Sec) from L-serine and tRNA(Sec): step 1/1. In terms of biological role, catalyzes the attachment of serine to tRNA(Ser). Is also able to aminoacylate tRNA(Sec) with serine, to form the misacylated tRNA L-seryl-tRNA(Sec), which will be further converted into selenocysteinyl-tRNA(Sec). This chain is Serine--tRNA ligase, found in Helicobacter pylori (strain ATCC 700392 / 26695) (Campylobacter pylori).